A 351-amino-acid chain; its full sequence is Small ribosomal subunit biogenesis GTPase RsgA 1 (351 aa).

The 159-residue stretch at 100–258 folds into the CP-type G domain; it reads LRTDAQIVAS…IIDTPGMREL (159 aa). GTP is bound by residues 148–151 and 200–208; these read SKVD and GSSGAGKST. Zn(2+)-binding residues include C282, C287, H289, and C295.

Belongs to the TRAFAC class YlqF/YawG GTPase family. RsgA subfamily. In terms of assembly, monomer. Associates with 30S ribosomal subunit, binds 16S rRNA. It depends on Zn(2+) as a cofactor.

Its subcellular location is the cytoplasm. In terms of biological role, one of several proteins that assist in the late maturation steps of the functional core of the 30S ribosomal subunit. Helps release RbfA from mature subunits. May play a role in the assembly of ribosomal proteins into the subunit. Circularly permuted GTPase that catalyzes slow GTP hydrolysis, GTPase activity is stimulated by the 30S ribosomal subunit. In Oceanobacillus iheyensis (strain DSM 14371 / CIP 107618 / JCM 11309 / KCTC 3954 / HTE831), this protein is Small ribosomal subunit biogenesis GTPase RsgA 1.